We begin with the raw amino-acid sequence, 726 residues long: Catalase-peroxidase (726 aa).

A disordered region spans residues 1 to 33 (MSTTDDTHNTLSAGKCPFHQGGHDRSAGAGTAS). Positions 105-226 (WHGAGTYRSI…LGATEMGLIY (122 aa)) form a cross-link, tryptophyl-tyrosyl-methioninium (Trp-Tyr) (with M-252). The active-site Proton acceptor is His-106. The segment at residues 226-252 (YVNPEGPDHSGEPLSAAAAIRATFGNM) is a cross-link (tryptophyl-tyrosyl-methioninium (Tyr-Met) (with W-105)). Position 267 (His-267) interacts with heme b.

This sequence belongs to the peroxidase family. Peroxidase/catalase subfamily. Homodimer or homotetramer. Heme b serves as cofactor. Post-translationally, formation of the three residue Trp-Tyr-Met cross-link is important for the catalase, but not the peroxidase activity of the enzyme.

It catalyses the reaction H2O2 + AH2 = A + 2 H2O. The enzyme catalyses 2 H2O2 = O2 + 2 H2O. Its function is as follows. Bifunctional enzyme with both catalase and broad-spectrum peroxidase activity. The protein is Catalase-peroxidase of Salmonella arizonae (strain ATCC BAA-731 / CDC346-86 / RSK2980).